The sequence spans 447 residues: Glutamate--tRNA ligase 2 (447 aa).

The 'HIGH' region motif lies at 8 to 18 (PSPTGYLHVGN). The short motif at 239–243 (KLSKR) is the 'KMSKS' region element. Lysine 242 is an ATP binding site.

The protein belongs to the class-I aminoacyl-tRNA synthetase family. Glutamate--tRNA ligase type 1 subfamily. In terms of assembly, monomer.

It localises to the cytoplasm. It catalyses the reaction tRNA(Glu) + L-glutamate + ATP = L-glutamyl-tRNA(Glu) + AMP + diphosphate. Its function is as follows. Catalyzes the attachment of glutamate to tRNA(Glu) in a two-step reaction: glutamate is first activated by ATP to form Glu-AMP and then transferred to the acceptor end of tRNA(Glu). The chain is Glutamate--tRNA ligase 2 from Granulibacter bethesdensis (strain ATCC BAA-1260 / CGDNIH1).